The chain runs to 132 residues: MSMQDPIADMFTRIRNGLSAEKEFVSVPFSKIKMEIANFLVNEGYIKSCSKGTTSMGHPSIEIELKYHAGVPVIEMIKRVSRPSLRIYKSHADLPKVYGGYGVAIVSTSKGLVSDRKARDLGVGGEIIGYVA.

The protein belongs to the universal ribosomal protein uS8 family. In terms of assembly, part of the 30S ribosomal subunit. Contacts proteins S5 and S12.

One of the primary rRNA binding proteins, it binds directly to 16S rRNA central domain where it helps coordinate assembly of the platform of the 30S subunit. The polypeptide is Small ribosomal subunit protein uS8 (Francisella tularensis subsp. novicida (strain U112)).